An 80-amino-acid polypeptide reads, in one-letter code: Defensin-like protein 17 (80 aa).

The signal sequence occupies residues M1–A29. Position 30 is a pyrrolidone carboxylic acid (Q30). 4 disulfides stabilise this stretch: C33/C80, C44/C65, C50/C74, and C54/C76.

It belongs to the DEFL family.

It localises to the secreted. Functionally, confers broad-spectrum resistance to pathogens. The chain is Defensin-like protein 17 (PDF1.2C) from Arabidopsis thaliana (Mouse-ear cress).